The chain runs to 219 residues: uncharacterized protein (219 aa).

This is an uncharacterized protein from Rickettsia prowazekii (strain Madrid E).